The following is a 394-amino-acid chain: MSNWGDYENEIYGQGLVGVAPTLPMSYADWEAHAQQALPPGVLSYVAGGSGDEHTQRANVEAFKHWGLMPRMLMAATERDLSVELWGKTWAAPMFFAPIGVIALCAQDGHGDAASAQASARTGVPYITSTLAVSSLEDIRKHAGDTPAYFQLYYPEDRDLAESFIRRAEEAGYDGLVITLDTWIFGWRPRDLTISNFPFLRGLCLTNYVTDPVFQKKFKAHSGVEAEGLRDNPRLAADFWHGLFGHSVTWEDIDWVRSITKMPVILKGIQHPDDARRAVDSGVDGIYCSNHGGRQANGGLPALDCLPEVVKASGDTPVLFDSGIRTGADVVKALAMGASAVGIGRPYAWGAALGGSKGIEHVARSLLAEADLIMAVDGYRNLKELTIDALRPTR.

The 376-residue stretch at valine 19 to arginine 394 folds into the FMN hydroxy acid dehydrogenase domain. Position 45 (tyrosine 45) interacts with a 2-oxocarboxylate. Residues proline 98 to glycine 100, serine 129, and glutamine 151 contribute to the FMN site. Tyrosine 153 provides a ligand contact to a 2-oxocarboxylate. Threonine 179 is a binding site for FMN. Arginine 188 provides a ligand contact to a 2-oxocarboxylate. Lysine 267 lines the FMN pocket. Histidine 291 serves as the catalytic Proton acceptor. An a 2-oxocarboxylate-binding site is contributed by arginine 294. FMN contacts are provided by residues aspartate 321–arginine 325 and arginine 345.

This sequence belongs to the FMN-dependent alpha-hydroxy acid dehydrogenase family. As to quaternary structure, homotetramer. FMN serves as cofactor.

It catalyses the reaction (S)-lactate + O2 = acetate + CO2 + H2O. Functionally, catalyzes the oxidative decarboxylation of (S)-lactate (L-lactate) to acetate and carbon dioxide. Its physiological role remains unknown. The protein is L-lactate 2-monooxygenase of Mycolicibacterium smegmatis (Mycobacterium smegmatis).